The primary structure comprises 281 residues: 2-dehydro-3-deoxyphosphooctonate aldolase (281 aa).

Belongs to the KdsA family.

It localises to the cytoplasm. The catalysed reaction is D-arabinose 5-phosphate + phosphoenolpyruvate + H2O = 3-deoxy-alpha-D-manno-2-octulosonate-8-phosphate + phosphate. The protein operates within carbohydrate biosynthesis; 3-deoxy-D-manno-octulosonate biosynthesis; 3-deoxy-D-manno-octulosonate from D-ribulose 5-phosphate: step 2/3. It functions in the pathway bacterial outer membrane biogenesis; lipopolysaccharide biosynthesis. In Pseudomonas savastanoi pv. phaseolicola (strain 1448A / Race 6) (Pseudomonas syringae pv. phaseolicola (strain 1448A / Race 6)), this protein is 2-dehydro-3-deoxyphosphooctonate aldolase.